The sequence spans 324 residues: Galectin-4 (324 aa).

Galectin domains follow at residues 19 to 150 (YKRP…INFL) and 196 to 324 (YVGT…YVQI). 257-263 (WGSEERK) is a binding site for a beta-D-galactoside. Position 259 is a phosphoserine (serine 259).

In terms of assembly, monomer. In terms of tissue distribution, highly expressed in full-length form in small and large intestine and stomach but was not detected in other tissues including lung, liver, kidney and spleen.

Its function is as follows. Galectin that binds lactose and a related range of sugars. The polypeptide is Galectin-4 (Lgals4) (Rattus norvegicus (Rat)).